The following is a 68-amino-acid chain: Bifunctional protein GlmU (68 aa).

UDP-N-acetyl-alpha-D-glucosamine contacts are provided by residues 9 to 12 and Lys-23; that span reads LAAG.

It in the N-terminal section; belongs to the N-acetylglucosamine-1-phosphate uridyltransferase family. In the C-terminal section; belongs to the transferase hexapeptide repeat family. In terms of assembly, homotrimer. Requires Mg(2+) as cofactor.

The protein localises to the cytoplasm. It carries out the reaction alpha-D-glucosamine 1-phosphate + acetyl-CoA = N-acetyl-alpha-D-glucosamine 1-phosphate + CoA + H(+). It catalyses the reaction N-acetyl-alpha-D-glucosamine 1-phosphate + UTP + H(+) = UDP-N-acetyl-alpha-D-glucosamine + diphosphate. It participates in nucleotide-sugar biosynthesis; UDP-N-acetyl-alpha-D-glucosamine biosynthesis; N-acetyl-alpha-D-glucosamine 1-phosphate from alpha-D-glucosamine 6-phosphate (route II): step 2/2. It functions in the pathway nucleotide-sugar biosynthesis; UDP-N-acetyl-alpha-D-glucosamine biosynthesis; UDP-N-acetyl-alpha-D-glucosamine from N-acetyl-alpha-D-glucosamine 1-phosphate: step 1/1. Its pathway is bacterial outer membrane biogenesis; LPS lipid A biosynthesis. Catalyzes the last two sequential reactions in the de novo biosynthetic pathway for UDP-N-acetylglucosamine (UDP-GlcNAc). The C-terminal domain catalyzes the transfer of acetyl group from acetyl coenzyme A to glucosamine-1-phosphate (GlcN-1-P) to produce N-acetylglucosamine-1-phosphate (GlcNAc-1-P), which is converted into UDP-GlcNAc by the transfer of uridine 5-monophosphate (from uridine 5-triphosphate), a reaction catalyzed by the N-terminal domain. This is Bifunctional protein GlmU (glmU) from Priestia megaterium (Bacillus megaterium).